A 416-amino-acid chain; its full sequence is Ferrochelatase, mitochondrial (416 aa).

Residues 1-47 (MAAALRSAGVLLRDRLLYGGSRACQPRRCQSGAATAAAATETAQRAR) constitute a mitochondrion transit peptide. Positions 41 to 62 (ETAQRARSPKPQAQPGNRKPRT) are disordered. An N6-acetyllysine modification is found at Lys50. Residues Arg108, Tyr116, and Ser123 each coordinate protoporphyrin IX. Lys131 is subject to N6-succinyllysine. Cys189 lines the [2Fe-2S] cluster pocket. Residue His223 is part of the active site. Lys283 bears the N6-acetyllysine; alternate mark. Lys283 carries the post-translational modification N6-succinyllysine; alternate. Asp376 is a catalytic residue. [2Fe-2S] cluster is bound by residues Cys396, Cys399, and Cys404. Position 408 is an N6-acetyllysine; alternate (Lys408). At Lys408 the chain carries N6-succinyllysine; alternate.

It belongs to the ferrochelatase family. In terms of assembly, homodimer. Homotetramer. Interaction with PGRMC1; the interaction results in decreased FECH activity. Interacts with ABCB10 and SLC25A37; this interaction forms an oligomeric complex. Forms a complex with ABCB7 and ABCB10, where a dimeric FECH bridges ABCB7 and ABCB10 homodimers; this complex may be required for cellular iron homeostasis, mitochondrial function and heme biosynthesis. Interacts with ABCB7 and ABCB10. The cofactor is [2Fe-2S] cluster.

The protein localises to the mitochondrion inner membrane. The catalysed reaction is heme b + 2 H(+) = protoporphyrin IX + Fe(2+). Its pathway is porphyrin-containing compound metabolism; protoheme biosynthesis; protoheme from protoporphyrin-IX: step 1/1. In terms of biological role, catalyzes the ferrous insertion into protoporphyrin IX and participates in the terminal step in the heme biosynthetic pathway. In Bos taurus (Bovine), this protein is Ferrochelatase, mitochondrial.